The primary structure comprises 111 residues: Ig kappa chain V-III region PC 2413 (111 aa).

A framework-1 region spans residues 1-23; that stretch reads DIVLTQSPASLAVSLGQRATISC. A disulfide bridge links Cys-23 with Cys-92. Residues 24–38 form a complementarity-determining-1 region; sequence RASESVVNYGVSLMH. A framework-2 region spans residues 39 to 53; the sequence is WFQQKPGQPPKLLIY. The segment at 54–60 is complementarity-determining-2; that stretch reads GASNRGS. The interval 61–92 is framework-3; the sequence is GVPARFSGSGSGTDFSLIIHPMEEDDSAMYFC. The tract at residues 93-101 is complementarity-determining-3; the sequence is HQTKEVPWT. The tract at residues 102-111 is framework-4; it reads FGGGTDLEIE.

In Mus musculus (Mouse), this protein is Ig kappa chain V-III region PC 2413.